Here is a 405-residue protein sequence, read N- to C-terminus: uncharacterized protein (405 aa).

The next 12 membrane-spanning stretches (helical) occupy residues 32–52 (MFVLTLVLFALARFSSPVLAG), 53–73 (WLTFAAIVPGLIVSPLAGVLL), 84–104 (IDMIASTAFITAISLAGWLGW), 108–128 (PVVCTLAMLFSLAGPLGIAGI), 150–170 (AVYSIVDVVGPAMAGGLVGWL), 171–191 (GPEAAMSLIAAACAGAAVCLS), 237–257 (WGALHVVIPVFVAGNYTVAAG), 260–280 (VVGLLWALVGIAGGVGALLAG), 291–311 (IMTAGMAVTAFATWPIAAEFG), 314–334 (GLTIGLLLAGAMSGPIDVAML), 352–372 (ISISVNQAGFPLGAAIAGVVI), and 378–398 (AIFVLAGITSVLAAIATLSIP).

This sequence belongs to the major facilitator superfamily.

It localises to the cell membrane. This is an uncharacterized protein from Sinorhizobium fredii (strain NBRC 101917 / NGR234).